A 109-amino-acid chain; its full sequence is Large ribosomal subunit protein eL42 (109 aa).

Residues 23–53 (VSQYKKSKESTHAQGRRRYDMKQSGFGGQTK) are disordered. The segment covering 28-43 (KSKESTHAQGRRRYDM) has biased composition (basic and acidic residues).

The protein belongs to the eukaryotic ribosomal protein eL42 family.

It is found in the cytoplasm. In Tetrahymena thermophila (strain SB210), this protein is Large ribosomal subunit protein eL42 (RPL36A).